We begin with the raw amino-acid sequence, 202 residues long: CASP-like protein 2U7 (202 aa).

Topologically, residues 1-10 (MLELYEKRRA) are cytoplasmic. The chain crosses the membrane as a helical span at residues 11 to 31 (LLLLRLAAMFLSLAALLITVL). The Extracellular portion of the chain corresponds to 32 to 64 (NREDGFFSINVFGSPQPILTKATADFTLVKGLK). The chain crosses the membrane as a helical span at residues 65-85 (FFAGAMGIVAGYSFLQLAIAM). Over 86–101 (ASMFSGAPSILGGKRM) the chain is Cytoplasmic. A helical transmembrane segment spans residues 102–122 (AWLCFVGDMTASHLCAAAAAV). Residues 123-148 (SAQLAYLGKRGAPMWSAVCTYFSHYC) are Extracellular-facing. Residues 149–169 (LVFGLAVIFAFLATLAALLVA) form a helical membrane-spanning segment. Residues 170 to 202 (SISSYHLFRLHGILQQQQQQRRQLQQEHVQDKP) lie on the Cytoplasmic side of the membrane.

It belongs to the Casparian strip membrane proteins (CASP) family. Homodimer and heterodimers.

Its subcellular location is the cell membrane. The polypeptide is CASP-like protein 2U7 (Selaginella moellendorffii (Spikemoss)).